Here is a 517-residue protein sequence, read N- to C-terminus: MTQERKIKRALISVSDKTGLEVFAKGLHKLGVELVSTSGTAKFLKAAGLPVRDLSDLTGFPEILDGRVKTLHPRVHGAILYKRDDDAHCKVIKDMGIEDIDMLVVNLYPFRETAAKAKHSFDAEVIENIDIGGPSMLRSAAKNFAHVAVLCRPKDYEVVLSEMAASQGALSYATRQRLCVEAFTHTAEYDAAISEEFKKGLNHEFPESKIVVLHKTQDLRYGENPHQKAVLYSQKKDFSFEQLHGKELSYNNILDAFGTWDAVCDFDLPACVIFKHVTPCGIGTGKVLTEAFNNAWACDPKSAFGGIIALNKPMQRDIAEAISKVFIEAVCAPDYDLESLEILKQKKNIRILKRNSPLSAAYQLKSVGDEVLLQQPDRTLLLDNKWDCVTKRKPTEEEDKALKFAWASVKHVKSNAVILTSESASVGIGAGQMSRVDSVKMAGMKFEEYLQENKKPKVLVIGSDAFFPFRDGVDAAAKLGVSAIVQPGGSVRDEEAIAAADEHGIAMIFTGLRHFRH.

The 151-residue stretch at 1–151 (MTQERKIKRA…KNFAHVAVLC (151 aa)) folds into the MGS-like domain.

It belongs to the PurH family.

It carries out the reaction (6R)-10-formyltetrahydrofolate + 5-amino-1-(5-phospho-beta-D-ribosyl)imidazole-4-carboxamide = 5-formamido-1-(5-phospho-D-ribosyl)imidazole-4-carboxamide + (6S)-5,6,7,8-tetrahydrofolate. The enzyme catalyses IMP + H2O = 5-formamido-1-(5-phospho-D-ribosyl)imidazole-4-carboxamide. The protein operates within purine metabolism; IMP biosynthesis via de novo pathway; 5-formamido-1-(5-phospho-D-ribosyl)imidazole-4-carboxamide from 5-amino-1-(5-phospho-D-ribosyl)imidazole-4-carboxamide (10-formyl THF route): step 1/1. It participates in purine metabolism; IMP biosynthesis via de novo pathway; IMP from 5-formamido-1-(5-phospho-D-ribosyl)imidazole-4-carboxamide: step 1/1. The sequence is that of Bifunctional purine biosynthesis protein PurH from Elusimicrobium minutum (strain Pei191).